We begin with the raw amino-acid sequence, 1198 residues long: MAEHPPLLDTAQILSSDISLLSAPIVSADGTQQVILVQVNPGEAFTIRREDGQFQCITGPAQVPMMSPNGSVPPIYVPPGYAPQVIEDNGVRRVVVVPQSPEFHPGGHTVIHRSPHPPLPGFIPVPTMMPPPPRHMYSPVTGAGDMATQYMPQYQSSQVYADVDAHSTHGRSNFRDERSSKTYERLQKKLKDRQGTQKDKMSSPPPSPQKCPSPISEHNGLIKGQNASGGNTGSARNRSGRGRSCTQVDPEMEEKDEETKAFEAFLSNIVKPVASDIQARTVLLTWSPPSSFINGEVNETAVPELFNYEVLVSSTGKEGKYRSVYIGEETSVTLNDLKPATDYHAKVQAESNSIKGIPSEAESFTTLSCEPDPPNAPRIANRTKNSLTLQWKAPSDNGSKIQSFILEWDEGKGNGEFCQCYMGSQKQFKITKLSPAMGCKFRLSAKNDYGVSDFSEEVLYYTSGCAPSVPASPVLTKAGVTWLSLQWTKPSGTPSDEGISYILEMEEETSGYGFKPKYDGEDLAYTVKNLRRSTKYKFKVIAYNSEGKSNPSEVVEFSTCPDKPGVPVKPSVKGKIHSHGFKITWDPPKDNGGAPINKYVVEMAEGSNGNKWDMIYSGTTREHLCDRLTPGCYYRLRVYCISDGGQSAVSESLLVQTPAVPPGPCLPPRLQGRPKAKEIQLRWGPPQVDGGSPISCYAVEMTPADKDEPRDVYQGSEVECTVGSLLPGKTYSFRLRAANRIGFGPFSEKYDITTAPGPPDQCRPPQVTCRSATCAQVNWEIPLSNGTDVTEYRLEWGGVEGSMQMCYCGPGLSCELKGLSPATTYYCRVQAMSVVGAGPFSEVVACVTPPSVPAIVTCLQEISDDDIEYPHYSPSTCLAISWKEPYDHGSEILAYSIDLGDKQPLTVGKMTSYIIDSLQPDTTYRIRIQALNSLGAGPFSHTIKLKTKPLPPDPPRLECVAFNHQNLKLKWGEGTPKTLSTDAVQYHLQMEDRNGRFVSLYRGPCHTYKVQRLSESTSYKFCIQACNEAGEGPLSQEYVFTTPKSLPAALKAPKIEKINDHICEITWEYLQPMKGDPVIYNLQVMVGKDSEFKQIYKGPDTSFRYSSLQLNCEYRFRVCAIRQCQDPTGHQDLVGPYSTTVFFISQRTEPPASSNKDSVDSARTRRTLSDEQCAAVILVVFAFFSILIAFIIQYFVIK.

Over residues 188–201 (KKLKDRQGTQKDKM) the composition is skewed to basic and acidic residues. Residues 188–257 (KKLKDRQGTQ…VDPEMEEKDE (70 aa)) are disordered. Residues S203, S207, and S213 each carry the phosphoserine modification. 9 Fibronectin type-III domains span residues 268 to 369 (NIVK…TLSC), 373 to 465 (PPNA…TSGC), 469 to 562 (VPAS…TCPD), 566 to 660 (VPVK…TPAV), 664 to 757 (PCLP…TAPG), 761 to 851 (QCRP…TPPS), 863 to 950 (SDDD…TKPL), 951 to 1045 (PPDP…TPKS), and 1049 to 1151 (ALKA…TEPP). Position 384 is an N6-acetyllysine (K384). A helical transmembrane segment spans residues 1177-1197 (ILVVFAFFSILIAFIIQYFVI).

The protein belongs to the FNDC3 family. Testis. Localizes to the acrosome of spermatids, as well as to Leydig cells. Can be detected on the acrosome beginning at steps 2-3 and continuing until step 12 of spermiogenesis.

It is found in the golgi apparatus membrane. Mediates spermatid-Sertoli adhesion during spermatogenesis. This chain is Fibronectin type-III domain-containing protein 3A (Fndc3a), found in Mus musculus (Mouse).